We begin with the raw amino-acid sequence, 316 residues long: Initiation factor TFIIB homolog (316 aa).

This sequence belongs to the asfivirus C315R family.

Functionally, putative initation factor. This is Initiation factor TFIIB homolog from Ornithodoros (relapsing fever ticks).